A 72-amino-acid polypeptide reads, in one-letter code: Translation initiation factor IF-1 (72 aa).

One can recognise an S1-like domain in the interval 1–72; that stretch reads MAKEGAIEVE…TRGRIVYRYK (72 aa).

This sequence belongs to the IF-1 family. In terms of assembly, component of the 30S ribosomal translation pre-initiation complex which assembles on the 30S ribosome in the order IF-2 and IF-3, IF-1 and N-formylmethionyl-tRNA(fMet); mRNA recruitment can occur at any time during PIC assembly.

It is found in the cytoplasm. Its function is as follows. One of the essential components for the initiation of protein synthesis. Stabilizes the binding of IF-2 and IF-3 on the 30S subunit to which N-formylmethionyl-tRNA(fMet) subsequently binds. Helps modulate mRNA selection, yielding the 30S pre-initiation complex (PIC). Upon addition of the 50S ribosomal subunit IF-1, IF-2 and IF-3 are released leaving the mature 70S translation initiation complex. The protein is Translation initiation factor IF-1 of Corynebacterium efficiens (strain DSM 44549 / YS-314 / AJ 12310 / JCM 11189 / NBRC 100395).